The chain runs to 97 residues: uncharacterized protein (97 aa).

This is an uncharacterized protein from Enterobacteria phage T4 (Bacteriophage T4).